Here is a 332-residue protein sequence, read N- to C-terminus: Anthranilate phosphoribosyltransferase (332 aa).

Residues Gly78, 81-82 (GD), Thr86, 88-91 (NVST), 106-114 (KHGNRAASS), and Ala118 contribute to the 5-phospho-alpha-D-ribose 1-diphosphate site. Gly78 is an anthranilate binding site. A Mg(2+)-binding site is contributed by Ser90. Position 109 (Asn109) interacts with anthranilate. Arg164 serves as a coordination point for anthranilate. 2 residues coordinate Mg(2+): Asp223 and Glu224.

The protein belongs to the anthranilate phosphoribosyltransferase family. As to quaternary structure, homodimer. Mg(2+) is required as a cofactor.

The catalysed reaction is N-(5-phospho-beta-D-ribosyl)anthranilate + diphosphate = 5-phospho-alpha-D-ribose 1-diphosphate + anthranilate. The protein operates within amino-acid biosynthesis; L-tryptophan biosynthesis; L-tryptophan from chorismate: step 2/5. Its function is as follows. Catalyzes the transfer of the phosphoribosyl group of 5-phosphorylribose-1-pyrophosphate (PRPP) to anthranilate to yield N-(5'-phosphoribosyl)-anthranilate (PRA). This chain is Anthranilate phosphoribosyltransferase, found in Sphingopyxis alaskensis (strain DSM 13593 / LMG 18877 / RB2256) (Sphingomonas alaskensis).